We begin with the raw amino-acid sequence, 492 residues long: Probable glycine dehydrogenase (decarboxylating) subunit 2 (492 aa).

Residue Lys274 is modified to N6-(pyridoxal phosphate)lysine.

The protein belongs to the GcvP family. C-terminal subunit subfamily. In terms of assembly, the glycine cleavage system is composed of four proteins: P, T, L and H. In this organism, the P 'protein' is a heterodimer of two subunits. Pyridoxal 5'-phosphate is required as a cofactor.

The catalysed reaction is N(6)-[(R)-lipoyl]-L-lysyl-[glycine-cleavage complex H protein] + glycine + H(+) = N(6)-[(R)-S(8)-aminomethyldihydrolipoyl]-L-lysyl-[glycine-cleavage complex H protein] + CO2. Functionally, the glycine cleavage system catalyzes the degradation of glycine. The P protein binds the alpha-amino group of glycine through its pyridoxal phosphate cofactor; CO(2) is released and the remaining methylamine moiety is then transferred to the lipoamide cofactor of the H protein. The sequence is that of Probable glycine dehydrogenase (decarboxylating) subunit 2 from Exiguobacterium sibiricum (strain DSM 17290 / CCUG 55495 / CIP 109462 / JCM 13490 / 255-15).